The chain runs to 87 residues: Small ribosomal subunit protein bS16 (87 aa).

It belongs to the bacterial ribosomal protein bS16 family.

This Ehrlichia chaffeensis (strain ATCC CRL-10679 / Arkansas) protein is Small ribosomal subunit protein bS16.